A 216-amino-acid polypeptide reads, in one-letter code: Sperm microtubule inner protein 8 (216 aa).

As to quaternary structure, microtubule inner protein component of sperm flagellar doublet microtubules. As to expression, expressed in sperm.

The protein resides in the cytoplasm. It localises to the cytoskeleton. It is found in the flagellum axoneme. Its function is as follows. Microtubule inner protein (MIP) part of the dynein-decorated doublet microtubules (DMTs) in flagellum axoneme. May serve to reinforce and thus stabilize the microtubule structure in the sperm flagella. The chain is Sperm microtubule inner protein 8 (SPMIP8) from Bos taurus (Bovine).